We begin with the raw amino-acid sequence, 295 residues long: Protoheme IX farnesyltransferase (295 aa).

The next 9 membrane-spanning stretches (helical) occupy residues 8–28 (VTKP…FLLA), 35–55 (YPLF…GCVF), 74–94 (VLVK…VLGI), 98–118 (LLLY…GFVI), 132–152 (VYGT…GYCA), 162–182 (LILL…IAIF), 208–228 (ITLY…SGYA), 233–253 (LVVA…GYKA), and 264–284 (FVFS…DFNV).

This sequence belongs to the UbiA prenyltransferase family. Protoheme IX farnesyltransferase subfamily.

Its subcellular location is the cell inner membrane. The enzyme catalyses heme b + (2E,6E)-farnesyl diphosphate + H2O = Fe(II)-heme o + diphosphate. It functions in the pathway porphyrin-containing compound metabolism; heme O biosynthesis; heme O from protoheme: step 1/1. Converts heme B (protoheme IX) to heme O by substitution of the vinyl group on carbon 2 of heme B porphyrin ring with a hydroxyethyl farnesyl side group. This Yersinia pseudotuberculosis serotype O:1b (strain IP 31758) protein is Protoheme IX farnesyltransferase.